The chain runs to 272 residues: Tryptophan synthase alpha chain (272 aa).

Active-site proton acceptor residues include glutamate 49 and glutamate 60.

It belongs to the TrpA family. In terms of assembly, tetramer of two alpha and two beta chains.

It carries out the reaction (1S,2R)-1-C-(indol-3-yl)glycerol 3-phosphate + L-serine = D-glyceraldehyde 3-phosphate + L-tryptophan + H2O. The protein operates within amino-acid biosynthesis; L-tryptophan biosynthesis; L-tryptophan from chorismate: step 5/5. In terms of biological role, the alpha subunit is responsible for the aldol cleavage of indoleglycerol phosphate to indole and glyceraldehyde 3-phosphate. In Legionella pneumophila subsp. pneumophila (strain Philadelphia 1 / ATCC 33152 / DSM 7513), this protein is Tryptophan synthase alpha chain.